A 675-amino-acid chain; its full sequence is Putative acyl-coenzyme A oxidase 3.2, peroxisomal (675 aa).

Residues M1–C34 constitute a peroxisome transit peptide. A442–L457 serves as a coordination point for FAD.

It belongs to the acyl-CoA oxidase family. Requires FAD as cofactor.

Its subcellular location is the peroxisome. It catalyses the reaction a 2,3-saturated acyl-CoA + O2 = a (2E)-enoyl-CoA + H2O2. Its function is as follows. Catalyzes the desaturation of acyl-CoAs to 2-trans-enoyl-CoAs. The protein is Putative acyl-coenzyme A oxidase 3.2, peroxisomal (ACX3.2) of Arabidopsis thaliana (Mouse-ear cress).